Here is a 100-residue protein sequence, read N- to C-terminus: Small ribosomal subunit protein uS14c (100 aa).

This sequence belongs to the universal ribosomal protein uS14 family. Part of the 30S ribosomal subunit.

Its subcellular location is the plastid. The protein localises to the chloroplast. In terms of biological role, binds 16S rRNA, required for the assembly of 30S particles. This chain is Small ribosomal subunit protein uS14c, found in Calycanthus floridus var. glaucus (Eastern sweetshrub).